Consider the following 590-residue polypeptide: Protein O-linked-mannose beta-1,4-N-acetylglucosaminyltransferase 2 (590 aa).

Topologically, residues 1 to 4 (MSVG) are cytoplasmic. A helical; Signal-anchor for type II membrane protein transmembrane segment spans residues 5–25 (TLLNGLLVSIVAALLWKYSKL). The Lumenal segment spans residues 26–590 (SEHAALLEEE…PFADVLMCRT (565 aa)). N-linked (GlcNAc...) asparagine glycans are attached at residues Asn98, Asn275, and Asn553. Residues 494 to 590 (RVRDPQCQTS…PFADVLMCRT (97 aa)) enclose the Fibronectin type-III domain.

This sequence belongs to the glycosyltransferase 61 family.

Its subcellular location is the endoplasmic reticulum membrane. The enzyme catalyses 3-O-(alpha-D-mannosyl)-L-threonyl-[protein] + UDP-N-acetyl-alpha-D-glucosamine = 3-O-(N-acetyl-beta-D-glucosaminyl-(1-&gt;4)-alpha-D-mannosyl)-L-threonyl-[protein] + UDP + H(+). The protein operates within protein modification; protein glycosylation. Functionally, O-linked mannose beta-1,4-N-acetylglucosaminyltransferase that transfers UDP-N-acetyl-D-glucosamine to the 4-position of the mannose to generate N-acetyl-D-glucosamine-beta-1,4-O-D-mannosylprotein. Involved in the biosynthesis of the phosphorylated O-mannosyl trisaccharide (N-acetylgalactosamine-beta-3-N-acetylglucosamine-beta-4-(phosphate-6-)mannose), a carbohydrate structure present in alpha-dystroglycan (DAG1), which is required for binding laminin G-like domain-containing extracellular proteins with high affinity. In Takifugu rubripes (Japanese pufferfish), this protein is Protein O-linked-mannose beta-1,4-N-acetylglucosaminyltransferase 2 (pomgnt2).